Here is a 263-residue protein sequence, read N- to C-terminus: Proteasome subunit alpha type-1 (263 aa).

Position 1 is an N-acetylmethionine (Met1). Ser110 carries the post-translational modification Phosphoserine; alternate. Ser110 carries O-linked (GlcNAc) serine; alternate glycosylation. Lys115 is covalently cross-linked (Glycyl lysine isopeptide (Lys-Gly) (interchain with G-Cter in ubiquitin)). Ser177 carries the post-translational modification Phosphoserine. Residue Lys208 forms a Glycyl lysine isopeptide (Lys-Gly) (interchain with G-Cter in ubiquitin) linkage. The segment at 232-263 (FLEGLEERPQRKAQPAQPADEPAEKADEPMEH) is disordered. Basic and acidic residues predominate over residues 253 to 263 (PAEKADEPMEH).

It belongs to the peptidase T1A family. In terms of assembly, the 26S proteasome consists of a 20S proteasome core and two 19S regulatory subunits. The 20S proteasome core is a barrel-shaped complex made of 28 subunits that are arranged in four stacked rings. The two outer rings are each formed by seven alpha subunits, and the two inner rings are formed by seven beta subunits. The proteolytic activity is exerted by three beta-subunits PSMB5, PSMB6 and PSMB7. Interacts with NOTCH3. Interacts with ZFAND1.

It is found in the cytoplasm. The protein localises to the nucleus. Functionally, component of the 20S core proteasome complex involved in the proteolytic degradation of most intracellular proteins. This complex plays numerous essential roles within the cell by associating with different regulatory particles. Associated with two 19S regulatory particles, forms the 26S proteasome and thus participates in the ATP-dependent degradation of ubiquitinated proteins. The 26S proteasome plays a key role in the maintenance of protein homeostasis by removing misfolded or damaged proteins that could impair cellular functions, and by removing proteins whose functions are no longer required. Associated with the PA200 or PA28, the 20S proteasome mediates ubiquitin-independent protein degradation. This type of proteolysis is required in several pathways including spermatogenesis (20S-PA200 complex) or generation of a subset of MHC class I-presented antigenic peptides (20S-PA28 complex). This Homo sapiens (Human) protein is Proteasome subunit alpha type-1.